Here is a 386-residue protein sequence, read N- to C-terminus: MGDDLKRKILLHNLSSNNPILEKLKGGQEPNSNEEGSDSIGDLPSLKNDYKRQDNNSTNCTYIPPSQWNTYFRSNEHIKVQSRNIEFNTYYTVPSSILGPSLPVFIFHHGAGSSGLSFANLARNLGDQLNNNCCCLSFDARGHGGTKFIDAKQAQNYFRDDFVDDFHTLVEYFVSEKLKHLPTEKLSIIFIGHSLGGSICTFTYSKLSIELKKQVIGVAMFDIVEEAATLALEKVNHFLQVTPNMFSGYEEAIDWHVSHELSRLRESADIAIPALFKSTESGKVVRITNLETFRPFWRTWFSDLSKSFVSLPTCKLLILAGNDNLDRELIIGQMQGKYQLVVFQDSGHFIQEDTPRKTALTLVDFWKRNDNKNVVIKSNWGSSNKV.

A disordered region spans residues 20–48; it reads ILEKLKGGQEPNSNEEGSDSIGDLPSLKN. Catalysis depends on residues Ser-194, Asp-222, and His-348.

Belongs to the AB hydrolase superfamily.

It carries out the reaction [phosphatase 2A protein]-C-terminal L-leucine methyl ester + H2O = [phosphatase 2A protein]-C-terminal L-leucine + methanol + H(+). In terms of biological role, demethylates proteins that have been reversibly carboxymethylated. Demethylates the phosphatase PP2A catalytic subunit. This Candida glabrata (strain ATCC 2001 / BCRC 20586 / JCM 3761 / NBRC 0622 / NRRL Y-65 / CBS 138) (Yeast) protein is Protein phosphatase methylesterase 1 (PPE1).